The following is a 115-amino-acid chain: Integration host factor subunit alpha (115 aa).

The protein belongs to the bacterial histone-like protein family. In terms of assembly, heterodimer of an alpha and a beta chain.

Functionally, this protein is one of the two subunits of integration host factor, a specific DNA-binding protein that functions in genetic recombination as well as in transcriptional and translational control. The chain is Integration host factor subunit alpha from Burkholderia pseudomallei (strain K96243).